A 181-amino-acid chain; its full sequence is MTTSCSSQVRQNYHQDSEAAINRQINLELYASYVYLSMSYYFDRDDVALKNFAKYFLHQSHGGRGHAEKLMKLQTQRGARIFLQDIMKPERDDWENGLTAMEFALHVVKNVYQSLLELHKLATDKNDPHLCDFIETHYLHEQVKAIKELGDHITNLHRMGAPEYGMAEYLFDKHTLGSSES.

Met1 carries the N-acetylmethionine modification. Thr2 bears the N-acetylthreonine; in Ferritin heavy chain, N-terminally processed mark. In terms of domain architecture, Ferritin-like diiron spans 11 to 160 (QNYHQDSEAA…DHITNLHRMG (150 aa)). Ser179 is subject to Phosphoserine.

It belongs to the ferritin family. As to quaternary structure, oligomer of 24 subunits. There are two types of subunits: L (light) chain and H (heavy) chain. The major chain can be light or heavy, depending on the species and tissue type. The functional molecule forms a roughly spherical shell with a diameter of 12 nm and contains a central cavity into which the insoluble mineral iron core is deposited. Interacts with NCOA4; NCOA4 promotes targeting of the iron-binding ferritin complex to autolysosomes following starvation or iron depletion. In terms of assembly, (Microbial infection) Interacts with classical swine fever virus protein NS4B. (Microbial infection) Interacts with Porcine circovirus 2 ORF4 protein.

Its subcellular location is the cytoplasm. It is found in the lysosome. It localises to the cytoplasmic vesicle. The protein resides in the autophagosome. The enzyme catalyses 4 Fe(2+) + O2 + 4 H(+) = 4 Fe(3+) + 2 H2O. Stores iron in a soluble, non-toxic, readily available form. Important for iron homeostasis. Has ferroxidase activity. Iron is taken up in the ferrous form and deposited as ferric hydroxides after oxidation. Also plays a role in delivery of iron to cells. Mediates iron uptake in capsule cells of the developing kidney. Delivery to lysosomes is mediated by the cargo receptor NCOA4 for autophagic degradation and release of iron. In terms of biological role, (Microbial infection) Is unable to assume its function upon interaction with viral proteins, thereby increasing Fe concentration in the cytoplasm. This would inhibit the accumulation of reactive oxygen in host cells, leading to reduced apoptosis and increasing the survival of virus infected cell. The sequence is that of Ferritin heavy chain (FTH1) from Sus scrofa (Pig).